The primary structure comprises 259 residues: Pyrroloquinoline-quinone synthase (259 aa).

The protein belongs to the PqqC family.

The catalysed reaction is 6-(2-amino-2-carboxyethyl)-7,8-dioxo-1,2,3,4,7,8-hexahydroquinoline-2,4-dicarboxylate + 3 O2 = pyrroloquinoline quinone + 2 H2O2 + 2 H2O + H(+). It functions in the pathway cofactor biosynthesis; pyrroloquinoline quinone biosynthesis. Its function is as follows. Ring cyclization and eight-electron oxidation of 3a-(2-amino-2-carboxyethyl)-4,5-dioxo-4,5,6,7,8,9-hexahydroquinoline-7,9-dicarboxylic-acid to PQQ. This is Pyrroloquinoline-quinone synthase from Bradyrhizobium sp. (strain ORS 278).